Consider the following 511-residue polypeptide: Putative CBL-interacting protein kinase 13 (511 aa).

Residues 25–279 (FEVGKLLGQG…AEGIMENEWF (255 aa)) enclose the Protein kinase domain. ATP is bound by residues 31 to 39 (LGQGNFAKV) and Lys-54. The active-site Proton acceptor is Asp-147. Residues 165-194 (DFGLSAVADGMRRDGLFHTFCGTPAYVAPE) form an activation loop region. The disordered stretch occupies residues 307–340 (VDAPTSPPDTPRTVDSGDVGAAPTRPRKAGSLTS). The 63-residue stretch at 321–383 (DSGDVGAAPT…PGFDLSGLFD (63 aa)) folds into the NAF domain. Residues 400–429 (KHTARFVSAAPVEVIVATLEAAAAAAGMAV) form a PPI region.

The protein belongs to the protein kinase superfamily. CAMK Ser/Thr protein kinase family. SNF1 subfamily. The cofactor is Mn(2+).

It catalyses the reaction L-seryl-[protein] + ATP = O-phospho-L-seryl-[protein] + ADP + H(+). The enzyme catalyses L-threonyl-[protein] + ATP = O-phospho-L-threonyl-[protein] + ADP + H(+). Its function is as follows. CIPK serine-threonine protein kinases interact with CBL proteins. Binding of a CBL protein to the regulatory NAF domain of CIPK protein lead to the activation of the kinase in a calcium-dependent manner. The polypeptide is Putative CBL-interacting protein kinase 13 (CIPK13) (Oryza sativa subsp. japonica (Rice)).